A 1132-amino-acid polypeptide reads, in one-letter code: Ubiquitin carboxyl-terminal hydrolase 43 (1132 aa).

A disordered region spans residues Met1–Leu103. A compositionally biased stretch (basic residues) spans Arg17–Leu28. Low complexity-rich tracts occupy residues Asn29–Ser44 and Phe63–Gly78. Residues Gln101 to Arg710 enclose the USP domain. The active-site Nucleophile is Cys110. His668 functions as the Proton acceptor in the catalytic mechanism. Arg746 carries the post-translational modification Asymmetric dimethylarginine. Disordered regions lie at residues Arg839 to Pro891, Thr935 to Gly1008, Arg1024 to Leu1044, and Arg1057 to Ile1106. Basic and acidic residues predominate over residues Gly941–Gly950. A compositionally biased stretch (low complexity) spans Gly958–Ser967. At Ser970 the chain carries Phosphoserine. Over residues Ala994–Gly1006 the composition is skewed to basic and acidic residues.

This sequence belongs to the peptidase C19 family.

The enzyme catalyses Thiol-dependent hydrolysis of ester, thioester, amide, peptide and isopeptide bonds formed by the C-terminal Gly of ubiquitin (a 76-residue protein attached to proteins as an intracellular targeting signal).. Its function is as follows. May recognize and hydrolyze the peptide bond at the C-terminal Gly of ubiquitin. Involved in the processing of poly-ubiquitin precursors as well as that of ubiquitinated proteins. In Mus musculus (Mouse), this protein is Ubiquitin carboxyl-terminal hydrolase 43 (Usp43).